The following is a 509-amino-acid chain: L-aspartate semialdehyde sulfurtransferase (509 aa).

Residue Cys133 is the Cysteine persulfide intermediate of the active site. 2 CBS domains span residues 394 to 450 (LSKP…NKKT) and 455 to 509 (MTRN…GGKK). The S-methyl-5'-thioadenosine site is built by Ser395, Ile399, and His421. S-adenosyl-L-methionine-binding positions include Asp439, Thr456, Ile460, and 479-482 (NISG). Residue 497-500 (TSED) participates in S-methyl-5'-thioadenosine binding.

Belongs to the L-aspartate semialdehyde sulfurtransferase family. Homodimer. May form a complex with MJ0099.

It carries out the reaction L-aspartate 4-semialdehyde + reduced 2[4Fe-4S]-[ferredoxin] + hydrogen sulfide + 3 H(+) = oxidized 2[4Fe-4S]-[ferredoxin] + L-homocysteine + H2O. The protein operates within amino-acid biosynthesis. Its activity is regulated as follows. The ligand-induced conformational reorganization of the protein could be an important regulatory mechanism. Functionally, required for O-acetylhomoserine sulfhydrylase (OAHS)-independent homocysteine (Hcy) biosynthesis. Together with MJ0099, catalyzes the condensation of sulfide with aspartate semialdehyde to generate homocysteine. Likely functions through persulfide intermediate. This Methanocaldococcus jannaschii (strain ATCC 43067 / DSM 2661 / JAL-1 / JCM 10045 / NBRC 100440) (Methanococcus jannaschii) protein is L-aspartate semialdehyde sulfurtransferase.